The following is a 187-amino-acid chain: Phosphatidylethanolamine-binding protein 1 (187 aa).

A2 carries the post-translational modification N-acetylalanine; in peptide hippocampal cholinergic neurostimulating. Phosphoserine is present on S6. Position 42 is a phosphothreonine (T42). Phosphoserine is present on residues S51, S52, S54, S98, and S132. An interaction with RAF1 region spans residues 93–134 (KGNDISSGTVLSDYVGSGPPSGTGLHRYVWLVYEQEQPLSCD).

It belongs to the phosphatidylethanolamine-binding protein family. As to quaternary structure, has a tendency to form dimers by disulfide cross-linking. Interacts with RAF1 and this interaction is enhanced if RAF1 is phosphorylated on residues 'Ser-338', 'Ser-339', 'Tyr-340' and 'Tyr-341'. Interacts with ALOX15; in response to IL13/interleukin-13, prevents the interaction of PEBP1 with RAF1 to activate the ERK signaling cascade. HCNP is expressed in brain. Increased expression in aged senescence-accelerated mice.

Its subcellular location is the cytoplasm. In terms of biological role, binds ATP, opioids and phosphatidylethanolamine. Has lower affinity for phosphatidylinositol and phosphatidylcholine. Serine protease inhibitor which inhibits thrombin, neuropsin and chymotrypsin but not trypsin, tissue type plasminogen activator and elastase. Inhibits the kinase activity of RAF1 by inhibiting its activation and by dissociating the RAF1/MEK complex and acting as a competitive inhibitor of MEK phosphorylation. Its function is as follows. HCNP may be involved in the function of the presynaptic cholinergic neurons of the central nervous system. HCNP increases the production of choline acetyltransferase but not acetylcholinesterase. Seems to be mediated by a specific receptor. The chain is Phosphatidylethanolamine-binding protein 1 (Pebp1) from Mus musculus (Mouse).